We begin with the raw amino-acid sequence, 210 residues long: Na(+)-translocating NADH-quinone reductase subunit D (210 aa).

A run of 6 helical transmembrane segments spans residues 14 to 34 (PIINNNPIALQILGVCSALAV), 42 to 62 (LVMTIALTAVTAFSNLFISLI), 72 to 92 (IIVQMTIIASLVIVVDQVLQA), 96 to 116 (AISKQLSVFVGLIITNCIVMG), 131 to 151 (FMDGIGNGLGYGAILLSVGVV), and 178 to 198 (NGLLLLPPSAFFLIGGLIWLI).

It belongs to the NqrDE/RnfAE family. As to quaternary structure, composed of six subunits; NqrA, NqrB, NqrC, NqrD, NqrE and NqrF.

It localises to the cell inner membrane. The enzyme catalyses a ubiquinone + n Na(+)(in) + NADH + H(+) = a ubiquinol + n Na(+)(out) + NAD(+). In terms of biological role, NQR complex catalyzes the reduction of ubiquinone-1 to ubiquinol by two successive reactions, coupled with the transport of Na(+) ions from the cytoplasm to the periplasm. NqrA to NqrE are probably involved in the second step, the conversion of ubisemiquinone to ubiquinol. This chain is Na(+)-translocating NADH-quinone reductase subunit D, found in Shewanella frigidimarina (strain NCIMB 400).